Consider the following 91-residue polypeptide: UPF0250 protein NGO_0791 (91 aa).

It belongs to the UPF0250 family.

The sequence is that of UPF0250 protein NGO_0791 from Neisseria gonorrhoeae (strain ATCC 700825 / FA 1090).